Reading from the N-terminus, the 404-residue chain is Sorting nexin-5 (404 aa).

An N-acetylalanine modification is found at alanine 2. Residues 25 to 172 (LNVDPSLQID…HVFLEYDQDL (148 aa)) form the PX domain. Residues 40 to 46 (SERDKVK), 99 to 105 (FDGPREK), and 113 to 116 (EGSM) contribute to the a 1,2-diacyl-sn-glycero-3-phospho-(1D-myo-inositol-4,5-bisphosphate) site. Positions 169–261 (DQDLSVRRKN…HSLALEEPTV (93 aa)) are interaction with DOCK1. Residues 183 to 200 (FGGFFKSVVKSADEVLFS) form a membrane-binding amphipathic helix region. Serine 193 carries the post-translational modification Phosphoserine. Residues 202-404 (VKEVDDFFEQ…QSCIDLFKNN (203 aa)) form the BAR domain. Lysine 275 carries the N6-acetyllysine modification.

The protein belongs to the sorting nexin family. In terms of assembly, forms heterodimers with BAR domain-containing sorting nexins SNX1 and SNX2; does not homodimerize. The heterodimers are proposed to self-assemble into helical arrays on the membrane to stabilize and expand local membrane curvature underlying endosomal tubule formation. Thought to be a component of the originally described retromer complex (also called SNX-BAR retromer) which is a pentamer containing the heterotrimeric retromer cargo-selective complex (CSC), also described as vacuolar protein sorting subcomplex (VPS), and a heterodimeric membrane-deforming subcomplex formed between SNX1 or SNX2 and SNX5 or SNX6 (also called SNX-BAR subcomplex); the respective CSC and SNX-BAR subcomplexes associate with low affinity. Interacts with SNX1, SNX2, VPS26A, VPS29, VPS35, DCTN1, DOCK1, MIB1, PIP5K1C. Interacts with HGS; increased by PIP5K1C kinase activity and by PtdIns(3P) and/or PtdIns(3,4)P2. As to expression, detected in macrophages (at protein level).

It is found in the endosome. Its subcellular location is the early endosome. It localises to the early endosome membrane. The protein resides in the cell membrane. The protein localises to the cytoplasmic vesicle membrane. It is found in the cytoplasm. Its subcellular location is the cell projection. It localises to the phagocytic cup. The protein resides in the ruffle. Functionally, involved in several stages of intracellular trafficking. Interacts with membranes containing phosphatidylinositol lipids. Acts in part as component of the retromer membrane-deforming SNX-BAR subcomplex. The SNX-BAR retromer mediates retrograde transport of cargo proteins from endosomes to the trans-Golgi network (TGN) and is involved in endosome-to-plasma membrane transport for cargo protein recycling. The SNX-BAR subcomplex functions to deform the donor membrane into a tubular profile called endosome-to-TGN transport carrier (ETC). Does not have in vitro vesicle-to-membrane remodeling activity. Involved in retrograde transport of lysosomal enzyme receptor IGF2R. May function as link between endosomal transport vesicles and dynactin. Plays a role in the internalization of EGFR after EGF stimulation. Involved in EGFR endosomal sorting and degradation; the function involves PIP5K1C and is retromer-independent. Together with PIP5K1C facilitates HGS interaction with ubiquitinated EGFR, which initiates EGFR sorting to intraluminal vesicles (ILVs) of the multivesicular body for subsequent lysosomal degradation. Involved in E-cadherin sorting and degradation; inhibits PIP5K1C-mediated E-cadherin degradation. Plays a role in macropinocytosis. This is Sorting nexin-5 (Snx5) from Mus musculus (Mouse).